We begin with the raw amino-acid sequence, 256 residues long: Probable cyclic nucleotide phosphodiesterase Fisuc_1441/FSU_1912 (256 aa).

The Fe cation site is built by D20, H22, D59, N89, H156, H196, and H198. AMP-binding positions include H22, D59, and N89 to H90. H198 contacts AMP.

This sequence belongs to the cyclic nucleotide phosphodiesterase class-III family. Requires Fe(2+) as cofactor.

The sequence is that of Probable cyclic nucleotide phosphodiesterase Fisuc_1441/FSU_1912 from Fibrobacter succinogenes (strain ATCC 19169 / S85).